A 144-amino-acid chain; its full sequence is Large ribosomal subunit protein uL11 (144 aa).

The protein belongs to the universal ribosomal protein uL11 family. In terms of assembly, part of the ribosomal stalk of the 50S ribosomal subunit. Interacts with L10 and the large rRNA to form the base of the stalk. L10 forms an elongated spine to which L12 dimers bind in a sequential fashion forming a multimeric L10(L12)X complex. In terms of processing, one or more lysine residues are methylated.

In terms of biological role, forms part of the ribosomal stalk which helps the ribosome interact with GTP-bound translation factors. This chain is Large ribosomal subunit protein uL11, found in Saccharopolyspora erythraea (strain ATCC 11635 / DSM 40517 / JCM 4748 / NBRC 13426 / NCIMB 8594 / NRRL 2338).